The following is a 550-amino-acid chain: Pectinesterase 2.2 (550 aa).

N-linked (GlcNAc...) asparagine glycosylation occurs at Asn179. Substrate is bound by residues Thr312 and Gln342. Cys331 and Cys358 are disulfide-bonded. Asp365 acts as the Proton donor in catalysis. Asp386 functions as the Nucleophile in the catalytic mechanism. A disulfide bridge connects residues Cys399 and Cys433. Substrate-binding residues include Arg454 and Trp456.

In the N-terminal section; belongs to the PMEI family. It in the C-terminal section; belongs to the pectinesterase family.

It is found in the secreted. Its subcellular location is the cell wall. It carries out the reaction [(1-&gt;4)-alpha-D-galacturonosyl methyl ester](n) + n H2O = [(1-&gt;4)-alpha-D-galacturonosyl](n) + n methanol + n H(+). It participates in glycan metabolism; pectin degradation; 2-dehydro-3-deoxy-D-gluconate from pectin: step 1/5. Its function is as follows. Pectinesterase may play a role in cell wall metabolism during fruit growth and development prior to ripening and may be required for preparing cell walls for softening by polygalacturonase during fruit ripening. This chain is Pectinesterase 2.2 (PME2.2), found in Solanum lycopersicum (Tomato).